Reading from the N-terminus, the 599-residue chain is Purine-uracil permease NCS1 (599 aa).

12 helical membrane passes run L140–L160, W164–L184, L218–L238, T257–W277, I293–G313, F327–L347, I363–V383, T411–A433, F445–W465, F474–L494, Y525–L545, and V560–I580.

This sequence belongs to the purine-cytosine permease (2.A.39) family. In terms of tissue distribution, expressed in roots, leaves, stems, flowers, siliques and seeds.

It is found in the plastid. It localises to the chloroplast envelope. Its subcellular location is the chloroplast membrane. Nucleobase-proton symporter that facilitates the uptake of nucleobases in the cells. Can transport adenine, guanine and uracil. Contributes to uracil import into plastids for plastidic uracil salvage which is essential for plant growth and development. In Arabidopsis thaliana (Mouse-ear cress), this protein is Purine-uracil permease NCS1.